The following is a 417-amino-acid chain: Serine hydroxymethyltransferase (417 aa).

At Lys54 the chain carries N6-acetyllysine. (6S)-5,6,7,8-tetrahydrofolate contacts are provided by residues Leu121 and 125-127 (GHL). N6-(pyridoxal phosphate)lysine is present on Lys229. An N6-acetyllysine mark is found at Lys250, Lys285, and Lys354. A (6S)-5,6,7,8-tetrahydrofolate-binding site is contributed by 355-357 (SPF). N6-acetyllysine is present on Lys375.

It belongs to the SHMT family. Homodimer. The cofactor is pyridoxal 5'-phosphate.

Its subcellular location is the cytoplasm. It catalyses the reaction (6R)-5,10-methylene-5,6,7,8-tetrahydrofolate + glycine + H2O = (6S)-5,6,7,8-tetrahydrofolate + L-serine. It functions in the pathway one-carbon metabolism; tetrahydrofolate interconversion. The protein operates within amino-acid biosynthesis; glycine biosynthesis; glycine from L-serine: step 1/1. Its function is as follows. Catalyzes the reversible interconversion of serine and glycine with tetrahydrofolate (THF) serving as the one-carbon carrier. This reaction serves as the major source of one-carbon groups required for the biosynthesis of purines, thymidylate, methionine, and other important biomolecules. Also exhibits THF-independent aldolase activity toward beta-hydroxyamino acids, producing glycine and aldehydes, via a retro-aldol mechanism. The chain is Serine hydroxymethyltransferase from Shigella sonnei (strain Ss046).